Here is a 107-residue protein sequence, read N- to C-terminus: Nucleoid-associated protein amb4104 (107 aa).

It belongs to the YbaB/EbfC family. Homodimer.

The protein resides in the cytoplasm. Its subcellular location is the nucleoid. Binds to DNA and alters its conformation. May be involved in regulation of gene expression, nucleoid organization and DNA protection. This chain is Nucleoid-associated protein amb4104, found in Paramagnetospirillum magneticum (strain ATCC 700264 / AMB-1) (Magnetospirillum magneticum).